The sequence spans 138 residues: MRTLWLMAVLLVGVEGGVIELTKMIVQEMGKNALTSYSLYGCNCGPGGRRKPMDATDSCCYVHKCCYKKLTDCDPIKDRYSYSWVNKAIVCGEKNPHLKELCECDKAVAICFRENMDTYDKKKKINLKLFCKKTSEKC.

An N-terminal signal peptide occupies residues 1–16 (MRTLWLMAVLLVGVEG). Cystine bridges form between cysteine 42/cysteine 131, cysteine 44/cysteine 60, cysteine 59/cysteine 111, cysteine 65/cysteine 138, cysteine 66/cysteine 104, and cysteine 91/cysteine 102. The interval 121–133 (KKKKINLKLFCKK) is important for membrane-damaging activities in eukaryotes and bacteria; heparin-binding.

It belongs to the phospholipase A2 family. Group II subfamily. K49 sub-subfamily. As to expression, expressed by the venom gland.

It is found in the secreted. Snake venom phospholipase A2 homolog that lacks enzymatic activity. Is myotoxic and displays edema-inducing activities. A model of myotoxic mechanism has been proposed: an apo Lys49-PLA2 is activated by the entrance of a hydrophobic molecule (e.g. fatty acid) at the hydrophobic channel of the protein leading to a reorientation of a monomer. This reorientation causes a transition between 'inactive' to 'active' states, causing alignment of C-terminal and membrane-docking sites (MDoS) side-by-side and putting the membrane-disruption sites (MDiS) in the same plane, exposed to solvent and in a symmetric position for both monomers. The MDoS region stabilizes the toxin on membrane by the interaction of charged residues with phospholipid head groups. Subsequently, the MDiS region destabilizes the membrane with penetration of hydrophobic residues. This insertion causes a disorganization of the membrane, allowing an uncontrolled influx of ions (i.e. calcium and sodium), and eventually triggering irreversible intracellular alterations and cell death. The sequence is that of Basic phospholipase A2 homolog 7 from Craspedocephalus gramineus (Bamboo pit viper).